Reading from the N-terminus, the 171-residue chain is Cytochrome c oxidase subunit 5b-2, mitochondrial (171 aa).

The N-terminal 54 residues, 1-54 (MWRRIVSSHLKSISAVGSCAAPSCRHAVVESTHLSLSTRASSIPAYSSIFSRLI), are a transit peptide targeting the mitochondrion. Zn(2+) contacts are provided by C121, C145, and C148.

It belongs to the cytochrome c oxidase subunit 5B (TC 3.D.4.11) family.

It localises to the mitochondrion inner membrane. Functionally, this protein is one of the nuclear-coded polypeptide chains of cytochrome c oxidase, the terminal oxidase in mitochondrial electron transport. The protein is Cytochrome c oxidase subunit 5b-2, mitochondrial (COX5B-2) of Arabidopsis thaliana (Mouse-ear cress).